The following is a 67-amino-acid chain: ATP synthase protein 8 (67 aa).

A helical membrane pass occupies residues 8–24 (TWFITITSMTITLFIMF). Position 54 is an N6-acetyllysine; alternate (Lys54). N6-succinyllysine; alternate is present on Lys54. Lys57 bears the N6-acetyllysine mark.

It belongs to the ATPase protein 8 family. As to quaternary structure, F-type ATPases have 2 components, CF(1) - the catalytic core - and CF(0) - the membrane proton channel. Component of an ATP synthase complex composed of ATP5PB, ATP5MC1, ATP5F1E, ATP5PD, ATP5ME, ATP5PF, ATP5MF, MT-ATP6, MT-ATP8, ATP5F1A, ATP5F1B, ATP5F1D, ATP5F1C, ATP5PO, ATP5MG, ATP5MK and ATP5MJ. Interacts with PRICKLE3.

It localises to the mitochondrion membrane. Functionally, mitochondrial membrane ATP synthase (F(1)F(0) ATP synthase or Complex V) produces ATP from ADP in the presence of a proton gradient across the membrane which is generated by electron transport complexes of the respiratory chain. F-type ATPases consist of two structural domains, F(1) - containing the extramembraneous catalytic core and F(0) - containing the membrane proton channel, linked together by a central stalk and a peripheral stalk. During catalysis, ATP synthesis in the catalytic domain of F(1) is coupled via a rotary mechanism of the central stalk subunits to proton translocation. Part of the complex F(0) domain. Minor subunit located with subunit a in the membrane. The chain is ATP synthase protein 8 (MT-ATP8) from Rhinoceros unicornis (Greater Indian rhinoceros).